We begin with the raw amino-acid sequence, 310 residues long: AA9 family lytic polysaccharide monooxygenase A (310 aa).

Residues 1 to 21 (MPSTKVAALSAVLALASTVAG) form the signal peptide. Cu(2+) contacts are provided by His22 and His107. Cystine bridges form between Cys77-Cys199 and Cys118-Cys122. 2 N-linked (GlcNAc...) asparagine glycosylation sites follow: Asn121 and Asn159. His185 provides a ligand contact to O2. Cu(2+) is bound at residue Tyr196.

This sequence belongs to the polysaccharide monooxygenase AA9 family. Cu(2+) serves as cofactor.

The protein resides in the secreted. It carries out the reaction [(1-&gt;4)-beta-D-glucosyl]n+m + reduced acceptor + O2 = 4-dehydro-beta-D-glucosyl-[(1-&gt;4)-beta-D-glucosyl]n-1 + [(1-&gt;4)-beta-D-glucosyl]m + acceptor + H2O.. Its function is as follows. Lytic polysaccharide monooxygenase (LPMO) that depolymerizes crystalline and amorphous polysaccharides via the oxidation of scissile alpha- or beta-(1-4)-glycosidic bonds, yielding C1, C4 as well as C6 oxidation products. Catalysis by LPMOs requires the reduction of the active-site copper from Cu(II) to Cu(I) by a reducing agent and H(2)O(2) or O(2) as a cosubstrate. Active on cellulose, but not on xylan, starch, or chitin. This is AA9 family lytic polysaccharide monooxygenase A from Talaromyces pinophilus (Penicillium pinophilum).